Here is a 418-residue protein sequence, read N- to C-terminus: Tyrosine--tRNA ligase (418 aa).

Position 38 (tyrosine 38) interacts with L-tyrosine. Residues 43–52 (CTARSLHIGS) carry the 'HIGH' region motif. Positions 175 and 179 each coordinate L-tyrosine. The 'KMSKS' region motif lies at 235-239 (KMGKT). Lysine 238 provides a ligand contact to ATP. One can recognise an S4 RNA-binding domain in the interval 348–413 (LSVVKLLQVS…CGKKRHLKVV (66 aa)).

This sequence belongs to the class-I aminoacyl-tRNA synthetase family. TyrS type 1 subfamily. In terms of assembly, homodimer.

It localises to the cytoplasm. The catalysed reaction is tRNA(Tyr) + L-tyrosine + ATP = L-tyrosyl-tRNA(Tyr) + AMP + diphosphate + H(+). Functionally, catalyzes the attachment of tyrosine to tRNA(Tyr) in a two-step reaction: tyrosine is first activated by ATP to form Tyr-AMP and then transferred to the acceptor end of tRNA(Tyr). The sequence is that of Tyrosine--tRNA ligase from Ehrlichia ruminantium (strain Welgevonden).